A 119-amino-acid polypeptide reads, in one-letter code: Large ribosomal subunit protein bL19 (119 aa).

This sequence belongs to the bacterial ribosomal protein bL19 family.

Functionally, this protein is located at the 30S-50S ribosomal subunit interface and may play a role in the structure and function of the aminoacyl-tRNA binding site. This is Large ribosomal subunit protein bL19 from Pseudoalteromonas translucida (strain TAC 125).